The primary structure comprises 340 residues: Lysophospholipase L2 (340 aa).

It localises to the cell inner membrane. It catalyses the reaction a 1-acyl-sn-glycero-3-phosphocholine + H2O = sn-glycerol 3-phosphocholine + a fatty acid + H(+). This is Lysophospholipase L2 (pldB) from Escherichia coli O6:H1 (strain CFT073 / ATCC 700928 / UPEC).